Consider the following 306-residue polypeptide: Bifunctional protein FolD 2 (306 aa).

NADP(+) contacts are provided by residues G169–S171 and I235.

This sequence belongs to the tetrahydrofolate dehydrogenase/cyclohydrolase family. As to quaternary structure, homodimer.

It catalyses the reaction (6R)-5,10-methylene-5,6,7,8-tetrahydrofolate + NADP(+) = (6R)-5,10-methenyltetrahydrofolate + NADPH. The enzyme catalyses (6R)-5,10-methenyltetrahydrofolate + H2O = (6R)-10-formyltetrahydrofolate + H(+). Its pathway is one-carbon metabolism; tetrahydrofolate interconversion. Functionally, catalyzes the oxidation of 5,10-methylenetetrahydrofolate to 5,10-methenyltetrahydrofolate and then the hydrolysis of 5,10-methenyltetrahydrofolate to 10-formyltetrahydrofolate. The protein is Bifunctional protein FolD 2 of Mesorhizobium japonicum (strain LMG 29417 / CECT 9101 / MAFF 303099) (Mesorhizobium loti (strain MAFF 303099)).